The sequence spans 330 residues: tRNA dimethylallyltransferase (330 aa).

The segment covering 1-11 (MDYSHSDSPST) has biased composition (polar residues). The segment at 1–21 (MDYSHSDSPSTAPAGKTPVDQ) is disordered. 29-36 (GPTGAGKS) serves as a coordination point for ATP. 31-36 (TGAGKS) serves as a coordination point for substrate. Residues 56-59 (DSMQ) are interaction with substrate tRNA.

Belongs to the IPP transferase family. As to quaternary structure, monomer. Mg(2+) serves as cofactor.

It catalyses the reaction adenosine(37) in tRNA + dimethylallyl diphosphate = N(6)-dimethylallyladenosine(37) in tRNA + diphosphate. Functionally, catalyzes the transfer of a dimethylallyl group onto the adenine at position 37 in tRNAs that read codons beginning with uridine, leading to the formation of N6-(dimethylallyl)adenosine (i(6)A). This Corynebacterium urealyticum (strain ATCC 43042 / DSM 7109) protein is tRNA dimethylallyltransferase.